A 509-amino-acid polypeptide reads, in one-letter code: Histidine ammonia-lyase (509 aa).

The segment at residues 142 to 144 (ASG) is a cross-link (5-imidazolinone (Ala-Gly)). Position 143 is a 2,3-didehydroalanine (Ser) (serine 143).

It belongs to the PAL/histidase family. In terms of processing, contains an active site 4-methylidene-imidazol-5-one (MIO), which is formed autocatalytically by cyclization and dehydration of residues Ala-Ser-Gly.

The protein resides in the cytoplasm. The enzyme catalyses L-histidine = trans-urocanate + NH4(+). It participates in amino-acid degradation; L-histidine degradation into L-glutamate; N-formimidoyl-L-glutamate from L-histidine: step 1/3. The chain is Histidine ammonia-lyase from Sphingopyxis alaskensis (strain DSM 13593 / LMG 18877 / RB2256) (Sphingomonas alaskensis).